The sequence spans 464 residues: Protein btn-1 (464 aa).

The signal sequence occupies residues 1-22 (MNRSPSSSGLLPLPGAPSSSWA). 10 helical membrane passes run 38 to 58 (AVFIAFWLFGLINNVLYVIIL), 73 to 93 (VVLLADVMPSFLTKLVAPYFI), 102 to 122 (IFIFVTLSSAGMLLIAFTPPS), 129 to 149 (LIGVVLSSISSGGGELSFLGL), 167 to 187 (GAGLIGSLLYVMLTDWIGLSV), 190 to 210 (SLLASAFLPIIMLVSFFLILP), 288 to 308 (SLFFPYMLPLLLVYIAEYTIN), 332 to 352 (PFYGFLYQVGVFISRSSIAFI), 354 to 374 (IHHLYLPSLLQVANLVLLTLH), and 376 to 396 (LLNFIPSVYIVFVIIFWEGLL).

It belongs to the battenin family.

It is found in the vacuole membrane. In terms of biological role, involved in vacuolar transport and vacuole pH homeostasis. Also required for cytokinesis. In Neurospora crassa (strain ATCC 24698 / 74-OR23-1A / CBS 708.71 / DSM 1257 / FGSC 987), this protein is Protein btn-1 (cln3).